A 669-amino-acid chain; its full sequence is GTP-binding protein 1 (669 aa).

Residues methionine 1 to alanine 32 form a disordered region. Residues serine 6, serine 8, serine 12, serine 24, serine 25, serine 44, serine 47, and serine 69 each carry the phosphoserine modification. Residues phenylalanine 158–tyrosine 389 enclose the tr-type G domain. The tract at residues glycine 167–serine 174 is G1. Residue glycine 167–serine 174 participates in GTP binding. Residues glycine 206 to serine 210 are G2. Positions aspartate 252–glycine 255 are G3. GTP contacts are provided by residues aspartate 252–histidine 256 and threonine 308–aspartate 311. The tract at residues threonine 308 to aspartate 311 is G4. Positions serine 366–valine 368 are G5. 2 stretches are compositionally biased toward polar residues: residues leucine 573–lysine 595 and aspartate 620–glutamine 637. The interval leucine 573 to cysteine 669 is disordered. Residue serine 580 is modified to Phosphoserine. The span at glycine 646 to lysine 657 shows a compositional bias: basic residues.

This sequence belongs to the TRAFAC class translation factor GTPase superfamily. Classic translation factor GTPase family. GTPBP1 subfamily. In terms of assembly, interacts with EXOSC2/RRP4, EXOSC3/RRP40, EXOSC5/RRP46, HNRNPD, HNRNPR and SYNCRIP. Identified in a complex with HNRNPD, HNRNPL, HNRNPQ, HNRNPR, HNRNPU and AANAT mRNA, but does not bind mRNA by itself. In terms of tissue distribution, detected in pineal gland (at protein level).

The protein resides in the cytoplasm. Its function is as follows. Promotes degradation of target mRNA species. Plays a role in the regulation of circadian mRNA stability. Binds GTP and has GTPase activity. The chain is GTP-binding protein 1 (Gtpbp1) from Rattus norvegicus (Rat).